Consider the following 718-residue polypeptide: DNA ligase (718 aa).

NAD(+)-binding positions include 44–48 (DADYD), 93–94 (SL), and Glu-127. Catalysis depends on Lys-129, which acts as the N6-AMP-lysine intermediate. 4 residues coordinate NAD(+): Arg-150, Glu-186, Lys-302, and Lys-326. Residues Cys-432, Cys-435, Cys-456, and Cys-462 each contribute to the Zn(2+) site. The BRCT domain maps to 640 to 718 (TAGSPVAGKT…EDQWLALISG (79 aa)).

Belongs to the NAD-dependent DNA ligase family. LigA subfamily. Mg(2+) serves as cofactor. It depends on Mn(2+) as a cofactor.

The catalysed reaction is NAD(+) + (deoxyribonucleotide)n-3'-hydroxyl + 5'-phospho-(deoxyribonucleotide)m = (deoxyribonucleotide)n+m + AMP + beta-nicotinamide D-nucleotide.. Functionally, DNA ligase that catalyzes the formation of phosphodiester linkages between 5'-phosphoryl and 3'-hydroxyl groups in double-stranded DNA using NAD as a coenzyme and as the energy source for the reaction. It is essential for DNA replication and repair of damaged DNA. In Rhizobium johnstonii (strain DSM 114642 / LMG 32736 / 3841) (Rhizobium leguminosarum bv. viciae), this protein is DNA ligase.